Here is a 699-residue protein sequence, read N- to C-terminus: Polyribonucleotide nucleotidyltransferase (699 aa).

Mg(2+) contacts are provided by Asp485 and Asp491. The KH domain occupies 552–611 (PRITVIKINPEKIRDVIGKGGAVIRALTEETGTTIELEDDGTVKIASSNGEATKEAIRRI). Residues 621–689 (GRIYNGKVIR…RQGRVRLSIK (69 aa)) enclose the S1 motif domain.

It belongs to the polyribonucleotide nucleotidyltransferase family. As to quaternary structure, component of the RNA degradosome, which is a multiprotein complex involved in RNA processing and mRNA degradation. Mg(2+) is required as a cofactor.

The protein localises to the cytoplasm. It catalyses the reaction RNA(n+1) + phosphate = RNA(n) + a ribonucleoside 5'-diphosphate. Involved in mRNA degradation. Catalyzes the phosphorolysis of single-stranded polyribonucleotides processively in the 3'- to 5'-direction. The sequence is that of Polyribonucleotide nucleotidyltransferase from Shewanella baltica (strain OS223).